A 245-amino-acid chain; its full sequence is Gas vesicle protein F (245 aa).

The protein belongs to the gas vesicle GvpF/GvpL family. In terms of assembly, binds GvpA.

The protein resides in the gas vesicle. In terms of biological role, a minor component of the gas vesicle, may be involved in preventing GvpA aggregation during gas vesicle nucleation. Gas vesicles (GV) are hollow, gas filled proteinaceous nanostructures. During planktonic growth they allow positioning of the organism at a favorable depth for light or nutrient acquisition. The protein is Gas vesicle protein F of Dolichospermum flosaquae (Anabaena flos-aquae).